The primary structure comprises 92 residues: Protein S100-A12 (92 aa).

EF-hand domains lie at 13–48 (NIFH…LQNT) and 49–84 (KDQP…VLKT). Histidine 16 contacts Cu cation. Histidine 16 lines the Zn(2+) pocket. Ca(2+)-binding residues include serine 19 and histidine 24. Position 26 (aspartate 26) interacts with Cu cation. Aspartate 26 serves as a coordination point for Zn(2+). Ca(2+) is bound by residues threonine 27 and glutamate 32. The tract at residues 38–53 (TKELPKTLQNTKDQPT) is hinge domain. Ca(2+)-binding residues include aspartate 62, aspartate 64, aspartate 66, and glutamate 73. Positions 86 and 90 each coordinate Cu cation. 2 residues coordinate Zn(2+): histidine 86 and histidine 90.

Belongs to the S-100 family. In terms of assembly, homodimer. Homooligomer (tetramer or hexamer) in the presence of calcium, zinc and copper ions. Interacts with AGER and both calcium and zinc are essential for the interaction. Interacts with CACYBP in a calcium-dependent manner. As to expression, up-regulated in stimulated inflammatory effector cells.

It localises to the secreted. It is found in the cytoplasm. The protein resides in the cytoskeleton. Its subcellular location is the cell membrane. In terms of biological role, S100A12 is a calcium-, zinc- and copper-binding protein which plays a prominent role in the regulation of inflammatory processes and immune response. Its pro-inflammatory activity involves recruitment of leukocytes, promotion of cytokine and chemokine production, and regulation of leukocyte adhesion and migration. Acts as an alarmin or a danger associated molecular pattern (DAMP) molecule and stimulates innate immune cells via binding to receptor for advanced glycation endproducts (AGER). Binding to AGER activates the MAP-kinase and NF-kappa-B signaling pathways leading to production of pro-inflammatory cytokines and up-regulation of cell adhesion molecules ICAM1 and VCAM1. Acts as a monocyte and mast cell chemoattractant. Can stimulate mast cell degranulation and activation which generates chemokines, histamine and cytokines inducing further leukocyte recruitment to the sites of inflammation. Can inhibit the activity of matrix metalloproteinases; MMP2, MMP3 and MMP9 by chelating Zn(2+) from their active sites. The chain is Protein S100-A12 (S100A12) from Bos taurus (Bovine).